Here is a 92-residue protein sequence, read N- to C-terminus: Small ribosomal subunit protein uS19 (92 aa).

It belongs to the universal ribosomal protein uS19 family.

Protein S19 forms a complex with S13 that binds strongly to the 16S ribosomal RNA. In Rickettsia bellii (strain OSU 85-389), this protein is Small ribosomal subunit protein uS19.